Reading from the N-terminus, the 989-residue chain is Autotransporter adhesin/invasin TibA (989 aa).

An N-terminal signal peptide occupies residues 1-54; sequence MNKVYNTVWNESTGTWVVTSELTRKGGLRPRQIKRTVLAGLIAGLLMPSMPALA. Residues Ser-74, Ser-86, Ser-93, Ser-94, Ser-97, Ser-100, Ser-112, Ser-113, Ser-116, Ser-119, Ser-124, Ser-131, Ser-132, and Ser-135 are each glycosylated (O-alpha-linked (D-glycero-D-manno-heptose) serine). Tandem repeats lie at residues 82 to 100, 101 to 119, 120 to 138, 139 to 157, 158 to 176, 177 to 195, 196 to 214, 215 to 233, 234 to 251, 252 to 270, 271 to 289, and 290 to 308. The segment at 82-308 is 12 X 19 AA approximate repeats; sequence TTINSGGKQY…QVEAGGSASK (227 aa). A compositionally biased stretch (polar residues) spans 110-123; the sequence is HVSSGGSATSSTIN. The interval 110–146 is disordered; the sequence is HVSSGGSATSSTINSGGHQHVSSGGSATNTTVNNGGR. The segment covering 124-135 has biased composition (low complexity); sequence SGGHQHVSSGGS. Residues 136–146 show a composition bias toward polar residues; the sequence is ATNTTVNNGGR. Ser-151, Ser-154, Ser-162, Ser-170, Ser-176, Ser-181, Ser-188, Ser-189, Ser-200, Ser-226, Ser-227, Ser-230, Ser-238, Ser-248, Ser-263, Ser-264, Ser-275, Ser-294, Ser-305, Ser-313, and Ser-322 each carry an O-alpha-linked (D-glycero-D-manno-heptose) serine glycan. A disordered region spans residues 623-686; it reads WYLKADTPPP…GTSSSPVRRT (64 aa). The segment covering 629 to 638 has biased composition (pro residues); sequence TPPPVTPPTN. 8 consecutive repeat copies span residues 639–643, 644–648, 649–653, 654–658, 659–663, 664–668, 669–673, and 674–678. The span at 639–667 shows a compositional bias: low complexity; that stretch reads PDADNPDAGNPDAGNPDAGNPDAGNPDAG. Residues 639-678 form an 8 X 5 AA repeats of P-[DG]-[AGT]-[DGA]-[NKT] region; the sequence is PDADNPDAGNPDAGNPDAGNPDAGNPDAGKPGTGKPDAGT. The 269-residue stretch at 721 to 989 folds into the Autotransporter domain; that stretch reads NTRAPGGVWG…TGGVGFRINF (269 aa).

Homohexamer. Glycosylated by TibC. Glycosylation is required for adhesion to and invasion of host cells. Glycosylation is dispensable for bacterial autoaggregation and biofilm formation.

The protein resides in the cell outer membrane. Functionally, mediates both adhesion to and invasion of human intestine epithelial cells. Also mediates bacterial cell aggregation via intercellular TibA-TibA interaction. Enhances biofilm formation. This chain is Autotransporter adhesin/invasin TibA, found in Escherichia coli O78:H11 (strain H10407 / ETEC).